The primary structure comprises 163 residues: Probable cyclic pyranopterin monophosphate synthase (163 aa).

Positions 1 to 23 (MPDGDDDALTHTTADGDAQMVDV) are disordered. Substrate contacts are provided by residues 80 to 82 (MCH) and 116 to 117 (ME). D131 is an active-site residue.

It belongs to the MoaC family. Homohexamer; trimer of dimers.

It carries out the reaction (8S)-3',8-cyclo-7,8-dihydroguanosine 5'-triphosphate = cyclic pyranopterin phosphate + diphosphate. The protein operates within cofactor biosynthesis; molybdopterin biosynthesis. Catalyzes the conversion of (8S)-3',8-cyclo-7,8-dihydroguanosine 5'-triphosphate to cyclic pyranopterin monophosphate (cPMP). This is Probable cyclic pyranopterin monophosphate synthase from Halobacterium salinarum (strain ATCC 29341 / DSM 671 / R1).